The sequence spans 1130 residues: ABC transporter ATM1 (1130 aa).

Residues Met1–Leu65 constitute a mitochondrion transit peptide. Disordered stretches follow at residues Asp191–Pro212, His276–Ser315, and Ser341–Pro385. 2 stretches are compositionally biased toward polar residues: residues Ser195–Ala206 and Gly305–Ser315. Residues Pro406–Leu426 traverse the membrane as a helical segment. Residues Pro468–Glu502 show a composition bias toward low complexity. Residues Pro468–Gly554 form a disordered region. The span at Gly503–Ser523 shows a compositional bias: basic and acidic residues. The next 5 helical transmembrane spans lie at Ile574–Gly594, Val653–Gly673, Gly678–Val698, Leu761–Ala781, and Leu791–Leu811. Residues Val587–Leu823 enclose the ABC transmembrane type-1 domain. An ABC transporter domain is found at Val857–Glu1111. Position 910–917 (Gly910–Ser917) interacts with ATP.

Belongs to the ABC transporter superfamily. ABCB family. Heavy Metal importer (TC 3.A.1.210) subfamily. As to quaternary structure, homodimer.

It is found in the mitochondrion membrane. Functionally, probably transports iron-sulfur clusters in an ATP-dependent manner. Plays a role in [Fe-S] proteins homeostasis. Required for optimal parasite growth and lytic cycle. The chain is ABC transporter ATM1 from Toxoplasma gondii (strain ATCC 50611 / Me49).